Consider the following 381-residue polypeptide: Lipid-A-disaccharide synthase (381 aa).

Belongs to the LpxB family.

It carries out the reaction a lipid X + a UDP-2-N,3-O-bis[(3R)-3-hydroxyacyl]-alpha-D-glucosamine = a lipid A disaccharide + UDP + H(+). Its pathway is bacterial outer membrane biogenesis; LPS lipid A biosynthesis. Its function is as follows. Condensation of UDP-2,3-diacylglucosamine and 2,3-diacylglucosamine-1-phosphate to form lipid A disaccharide, a precursor of lipid A, a phosphorylated glycolipid that anchors the lipopolysaccharide to the outer membrane of the cell. The protein is Lipid-A-disaccharide synthase of Rickettsia bellii (strain OSU 85-389).